The chain runs to 88 residues: Eclosion hormone (88 aa).

A signal peptide spans Met-1 to Cys-26. Cystine bridges form between Cys-40–Cys-64, Cys-44–Cys-60, and Cys-47–Cys-75.

It belongs to the insect eclosion hormone family.

It is found in the secreted. Functionally, neuropeptide that triggers the performance of ecdysis behaviors at the end of a molt. It triggers adult behavior patterns: larval, pupal and adult ecdysis, and plasticization during the molt. The chain is Eclosion hormone from Manduca sexta (Tobacco hawkmoth).